A 913-amino-acid polypeptide reads, in one-letter code: Valine--tRNA ligase (913 aa).

The 'HIGH' region signature appears at 48–58; the sequence is PNVTGSLHMGH. Positions 541 to 545 match the 'KMSKS' region motif; that stretch reads KMSKS. K544 contacts ATP. Residues 839–907 are a coiled coil; the sequence is VVDLEALVSK…IEHRLQSLGV (69 aa).

This sequence belongs to the class-I aminoacyl-tRNA synthetase family. ValS type 1 subfamily. In terms of assembly, monomer.

Its subcellular location is the cytoplasm. The catalysed reaction is tRNA(Val) + L-valine + ATP = L-valyl-tRNA(Val) + AMP + diphosphate. Catalyzes the attachment of valine to tRNA(Val). As ValRS can inadvertently accommodate and process structurally similar amino acids such as threonine, to avoid such errors, it has a 'posttransfer' editing activity that hydrolyzes mischarged Thr-tRNA(Val) in a tRNA-dependent manner. The sequence is that of Valine--tRNA ligase from Thermosynechococcus vestitus (strain NIES-2133 / IAM M-273 / BP-1).